The sequence spans 344 residues: Arginine N-succinyltransferase (344 aa).

A succinyl-CoA-binding site is contributed by L125. The active-site Proton donor is the H229.

This sequence belongs to the arginine N-succinyltransferase family.

It carries out the reaction succinyl-CoA + L-arginine = N(2)-succinyl-L-arginine + CoA + H(+). The protein operates within amino-acid degradation; L-arginine degradation via AST pathway; L-glutamate and succinate from L-arginine: step 1/5. Its function is as follows. Catalyzes the transfer of succinyl-CoA to arginine to produce N(2)-succinylarginine. In Escherichia coli O17:K52:H18 (strain UMN026 / ExPEC), this protein is Arginine N-succinyltransferase.